The following is a 428-amino-acid chain: Adenylosuccinate synthetase (428 aa).

Residues 12-18 (GDEGKGK) and 40-42 (GHS) each bind GTP. Asp13 functions as the Proton acceptor in the catalytic mechanism. Positions 13 and 40 each coordinate Mg(2+). Residues 13–16 (DEGK), 38–41 (NAGH), Thr128, Arg142, Gln223, Thr238, and Arg302 each bind IMP. Catalysis depends on His41, which acts as the Proton donor. Position 298–304 (298–304 (VTTGRPR)) interacts with substrate. Residues Arg304, 330 to 332 (KLD), and 412 to 414 (GTG) each bind GTP.

The protein belongs to the adenylosuccinate synthetase family. Homodimer. Mg(2+) is required as a cofactor.

It localises to the cytoplasm. It catalyses the reaction IMP + L-aspartate + GTP = N(6)-(1,2-dicarboxyethyl)-AMP + GDP + phosphate + 2 H(+). The protein operates within purine metabolism; AMP biosynthesis via de novo pathway; AMP from IMP: step 1/2. Functionally, plays an important role in the de novo pathway of purine nucleotide biosynthesis. Catalyzes the first committed step in the biosynthesis of AMP from IMP. The polypeptide is Adenylosuccinate synthetase (Bifidobacterium longum subsp. infantis (strain ATCC 15697 / DSM 20088 / JCM 1222 / NCTC 11817 / S12)).